We begin with the raw amino-acid sequence, 824 residues long: Lon protease (824 aa).

A disordered region spans residues 1 to 23; the sequence is MNEPMSLFDDLPEEHDEPQEAPE. Acidic residues predominate over residues 10-20; that stretch reads DLPEEHDEPQE. Residues 26–222 form the Lon N-terminal domain; sequence LPMVVLGEMV…KVYLVLARQL (197 aa). 375–382 serves as a coordination point for ATP; that stretch reads GPPGVGKT. Residues 617 to 798 enclose the Lon proteolytic domain; that stretch reads QDEVGVATGV…DEVLRIALSR (182 aa). Catalysis depends on residues serine 704 and lysine 747. The tract at residues 800 to 824 is disordered; it reads PTPANNQNGSHTNNRGQPSPAPAGT. Over residues 802-816 the composition is skewed to polar residues; it reads PANNQNGSHTNNRGQ.

Belongs to the peptidase S16 family. As to quaternary structure, homohexamer. Organized in a ring with a central cavity.

The protein localises to the cytoplasm. It carries out the reaction Hydrolysis of proteins in presence of ATP.. ATP-dependent serine protease that mediates the selective degradation of mutant and abnormal proteins as well as certain short-lived regulatory proteins. Required for cellular homeostasis and for survival from DNA damage and developmental changes induced by stress. Degrades polypeptides processively to yield small peptide fragments that are 5 to 10 amino acids long. Binds to DNA in a double-stranded, site-specific manner. This is Lon protease from Chloroflexus aggregans (strain MD-66 / DSM 9485).